Here is a 93-residue protein sequence, read N- to C-terminus: uncharacterized protein (93 aa).

This is an uncharacterized protein from Sulfolobus islandicus filamentous virus (isolate Iceland/Hveragerdi) (SIFV).